Here is a 210-residue protein sequence, read N- to C-terminus: Probable glutathione peroxidase 8 (210 aa).

Residues 13 to 35 (ASRAGLFKVLLSVALCMGSLYLL) traverse the membrane as a helical segment.

Belongs to the glutathione peroxidase family.

The protein localises to the membrane. It catalyses the reaction 2 glutathione + H2O2 = glutathione disulfide + 2 H2O. This is Probable glutathione peroxidase 8 (gpx8) from Danio rerio (Zebrafish).